A 209-amino-acid polypeptide reads, in one-letter code: Glutathione S-transferase 1, isoform D (209 aa).

The GST N-terminal domain occupies 1–80 (MDFYYLPGSA…YLAEKYGKDD (80 aa)). Residues Ser9, 50-52 (HCI), and 64-66 (ESR) contribute to the glutathione site. Residues 86–207 (DPQKRAVVNQ…AGADEFKAKF (122 aa)) enclose the GST C-terminal domain.

This sequence belongs to the GST superfamily. Theta family. As to quaternary structure, homodimer.

The catalysed reaction is RX + glutathione = an S-substituted glutathione + a halide anion + H(+). The enzyme catalyses 1,1,1-trichloro-2,2-bis(4-chlorophenyl)ethane = 1,1-dichloro-2,2-bis(4-chlorophenyl)ethylene + chloride + H(+). Inhibited by S-hexylglutathione. In terms of biological role, conjugation of reduced glutathione to a wide number of exogenous and endogenous hydrophobic electrophiles. Has DDT dehydrochlorinase activity. This chain is Glutathione S-transferase 1, isoform D (GstD1), found in Anopheles gambiae (African malaria mosquito).